We begin with the raw amino-acid sequence, 977 residues long: Bifunctional glutamine synthetase adenylyltransferase/adenylyl-removing enzyme (977 aa).

The interval Met1–Asp457 is adenylyl removase. The interval Gly468–Ser977 is adenylyl transferase.

It belongs to the GlnE family. Mg(2+) serves as cofactor.

It catalyses the reaction [glutamine synthetase]-O(4)-(5'-adenylyl)-L-tyrosine + phosphate = [glutamine synthetase]-L-tyrosine + ADP. The enzyme catalyses [glutamine synthetase]-L-tyrosine + ATP = [glutamine synthetase]-O(4)-(5'-adenylyl)-L-tyrosine + diphosphate. In terms of biological role, involved in the regulation of glutamine synthetase GlnA, a key enzyme in the process to assimilate ammonia. When cellular nitrogen levels are high, the C-terminal adenylyl transferase (AT) inactivates GlnA by covalent transfer of an adenylyl group from ATP to specific tyrosine residue of GlnA, thus reducing its activity. Conversely, when nitrogen levels are low, the N-terminal adenylyl removase (AR) activates GlnA by removing the adenylyl group by phosphorolysis, increasing its activity. The regulatory region of GlnE binds the signal transduction protein PII (GlnB) which indicates the nitrogen status of the cell. The chain is Bifunctional glutamine synthetase adenylyltransferase/adenylyl-removing enzyme from Pseudomonas putida (strain ATCC 47054 / DSM 6125 / CFBP 8728 / NCIMB 11950 / KT2440).